The sequence spans 138 residues: Large ribosomal subunit protein uL16 (138 aa).

The segment covering Met-1–Gly-16 has biased composition (basic residues). Residues Met-1–Gly-24 are disordered.

This sequence belongs to the universal ribosomal protein uL16 family. In terms of assembly, part of the 50S ribosomal subunit.

Functionally, binds 23S rRNA and is also seen to make contacts with the A and possibly P site tRNAs. This is Large ribosomal subunit protein uL16 from Arthrobacter sp. (strain FB24).